The following is a 197-amino-acid chain: Cerebellin-3 (197 aa).

The signal sequence occupies residues 1-24 (MGTEWHKPKLSLALVLLTLEAGWA). The region spanning 59 to 197 (APPGRVAFAA…SFSGFLIFPL (139 aa)) is the C1q domain. Positions 64–197 (VAFAAVRSHH…SFSGFLIFPL (134 aa)) are necessary for interaction with CBLN3, and homotrimerization. Asn-82 carries an N-linked (GlcNAc...) asparagine glycan.

Heterohexamer; disulfide-linked heterotrimers. Interacts with CBLN1. May also form oligomers with CBLN2 and CBLN4. As to expression, expressed in brain, restricted to the cerebellar cortex. Within the cerebellum, expressed in granule layers (at protein level). Also detected in postsynaptic Purkinje cell spines (at protein level).

The protein resides in the endoplasmic reticulum. It is found in the golgi apparatus. Its subcellular location is the cis-Golgi network. It localises to the secreted. The protein localises to the synapse. May be involved in synaptic functions in the CNS. The sequence is that of Cerebellin-3 (Cbln3) from Mus musculus (Mouse).